A 530-amino-acid chain; its full sequence is Bifunctional purine biosynthesis protein PurH (530 aa).

The MGS-like domain occupies 1-148 (MNNARPIRRA…KNHKDVTIVV (148 aa)).

This sequence belongs to the PurH family.

It catalyses the reaction (6R)-10-formyltetrahydrofolate + 5-amino-1-(5-phospho-beta-D-ribosyl)imidazole-4-carboxamide = 5-formamido-1-(5-phospho-D-ribosyl)imidazole-4-carboxamide + (6S)-5,6,7,8-tetrahydrofolate. The catalysed reaction is IMP + H2O = 5-formamido-1-(5-phospho-D-ribosyl)imidazole-4-carboxamide. The protein operates within purine metabolism; IMP biosynthesis via de novo pathway; 5-formamido-1-(5-phospho-D-ribosyl)imidazole-4-carboxamide from 5-amino-1-(5-phospho-D-ribosyl)imidazole-4-carboxamide (10-formyl THF route): step 1/1. It participates in purine metabolism; IMP biosynthesis via de novo pathway; IMP from 5-formamido-1-(5-phospho-D-ribosyl)imidazole-4-carboxamide: step 1/1. The chain is Bifunctional purine biosynthesis protein PurH from Vibrio vulnificus (strain YJ016).